The primary structure comprises 397 residues: Ribosomal RNA large subunit methyltransferase I (397 aa).

The 78-residue stretch at Thr2–Val79 folds into the PUA domain.

It belongs to the methyltransferase superfamily. RlmI family.

It localises to the cytoplasm. It carries out the reaction cytidine(1962) in 23S rRNA + S-adenosyl-L-methionine = 5-methylcytidine(1962) in 23S rRNA + S-adenosyl-L-homocysteine + H(+). In terms of biological role, specifically methylates the cytosine at position 1962 (m5C1962) of 23S rRNA. The sequence is that of Ribosomal RNA large subunit methyltransferase I from Vibrio campbellii (strain ATCC BAA-1116).